The sequence spans 485 residues: Aldehyde dehydrogenase family 3 member A2 (485 aa).

Topologically, residues 1 to 463 are cytoplasmic; it reads MELEVRRVRQ…FLLKRFNKEK (463 aa). An NAD(+)-binding site is contributed by 185 to 190; it reads GNTAVG. Catalysis depends on residues E207 and C241. S293 is subject to Phosphoserine. The helical transmembrane segment at 464–484 threads the bilayer; sequence LGLLLLTFLGIVAAVLVKAEY. Residues 481–484 carry the Prevents secretion from ER motif; that stretch reads KAEY.

This sequence belongs to the aldehyde dehydrogenase family. Homodimer.

It localises to the microsome membrane. The protein localises to the endoplasmic reticulum membrane. It catalyses the reaction an aldehyde + NAD(+) + H2O = a carboxylate + NADH + 2 H(+). It carries out the reaction a fatty aldehyde + NAD(+) + H2O = a fatty acid + NADH + 2 H(+). The enzyme catalyses (2E)-hexadecenal + NAD(+) + H2O = (E)-hexadec-2-enoate + NADH + 2 H(+). The catalysed reaction is hexadecanoate + NADH + 2 H(+) = hexadecanal + NAD(+) + H2O. It catalyses the reaction 22-oxodocosanoate + NAD(+) + H2O = docosanedioate + NADH + 2 H(+). It carries out the reaction 2,6,10,14-tetramethylpentadecanal + NAD(+) + H2O = 2,6,10,14-tetramethylpentadecanoate + NADH + 2 H(+). The enzyme catalyses octadecanal + NAD(+) + H2O = octadecanoate + NADH + 2 H(+). The catalysed reaction is dodecanoate + NADH + 2 H(+) = dodecanal + NAD(+) + H2O. It catalyses the reaction decanal + NAD(+) + H2O = decanoate + NADH + 2 H(+). It carries out the reaction tetradecanal + NAD(+) + H2O = tetradecanoate + NADH + 2 H(+). The enzyme catalyses octanal + NAD(+) + H2O = octanoate + NADH + 2 H(+). The catalysed reaction is heptanal + NAD(+) + H2O = heptanoate + NADH + 2 H(+). It catalyses the reaction (2E,6E)-farnesal + NAD(+) + H2O = (2E,6E)-farnesoate + NADH + 2 H(+). In terms of biological role, catalyzes the oxidation of medium and long-chain aliphatic aldehydes to fatty acids. Active on a variety of saturated and unsaturated aliphatic aldehydes between 6 and 24 carbons in length. Responsible for conversion of the sphingosine 1-phosphate (S1P) degradation product hexadecenal to hexadecenoic acid. The sequence is that of Aldehyde dehydrogenase family 3 member A2 (ALDH3A2) from Pongo abelii (Sumatran orangutan).